We begin with the raw amino-acid sequence, 326 residues long: Probable cell division protein WhiA (326 aa).

A DNA-binding region (H-T-H motif) is located at residues 275–308 (SLDELGRLADPVMTKDAIAGRIRRLLAMADKRAL).

The protein belongs to the WhiA family.

In terms of biological role, involved in cell division and chromosome segregation. This chain is Probable cell division protein WhiA, found in Pseudarthrobacter chlorophenolicus (strain ATCC 700700 / DSM 12829 / CIP 107037 / JCM 12360 / KCTC 9906 / NCIMB 13794 / A6) (Arthrobacter chlorophenolicus).